The primary structure comprises 220 residues: Probable nicotinate-nucleotide adenylyltransferase (220 aa).

This sequence belongs to the NadD family.

It carries out the reaction nicotinate beta-D-ribonucleotide + ATP + H(+) = deamido-NAD(+) + diphosphate. The protein operates within cofactor biosynthesis; NAD(+) biosynthesis; deamido-NAD(+) from nicotinate D-ribonucleotide: step 1/1. Catalyzes the reversible adenylation of nicotinate mononucleotide (NaMN) to nicotinic acid adenine dinucleotide (NaAD). This Laribacter hongkongensis (strain HLHK9) protein is Probable nicotinate-nucleotide adenylyltransferase.